Here is a 142-residue protein sequence, read N- to C-terminus: Large ribosomal subunit protein uL11 (142 aa).

The protein belongs to the universal ribosomal protein uL11 family. As to quaternary structure, part of the ribosomal stalk of the 50S ribosomal subunit. Interacts with L10 and the large rRNA to form the base of the stalk. L10 forms an elongated spine to which L12 dimers bind in a sequential fashion forming a multimeric L10(L12)X complex. In terms of processing, one or more lysine residues are methylated.

Functionally, forms part of the ribosomal stalk which helps the ribosome interact with GTP-bound translation factors. The protein is Large ribosomal subunit protein uL11 of Mycolicibacterium vanbaalenii (strain DSM 7251 / JCM 13017 / BCRC 16820 / KCTC 9966 / NRRL B-24157 / PYR-1) (Mycobacterium vanbaalenii).